We begin with the raw amino-acid sequence, 315 residues long: Cytochrome c biogenesis protein CcsA (315 aa).

A run of 8 helical transmembrane segments spans residues 15-35 (SCFL…GFGG), 39-59 (FSFT…LQLI), 73-93 (LYES…YIEV), 97-117 (TLFL…FTDF), 144-164 (VMIA…AYLV), 222-242 (TIGI…IWAN), 257-277 (WAFI…VGGW), and 283-303 (ALVA…VNLL).

The protein belongs to the CcmF/CycK/Ccl1/NrfE/CcsA family. In terms of assembly, may interact with Ccs1.

The protein resides in the plastid. The protein localises to the chloroplast thylakoid membrane. In terms of biological role, required during biogenesis of c-type cytochromes (cytochrome c6 and cytochrome f) at the step of heme attachment. The sequence is that of Cytochrome c biogenesis protein CcsA from Chlorella vulgaris (Green alga).